We begin with the raw amino-acid sequence, 86 residues long: Ferredoxin YfhL (86 aa).

2 consecutive 4Fe-4S ferredoxin-type domains span residues 1–29 and 31–65; these read MALL…MGDH and YEIN…KDPA. [4Fe-4S] cluster contacts are provided by C9, C12, C15, C19, C38, C41, C50, and C54.

Requires [4Fe-4S] cluster as cofactor.

Ferredoxins are iron-sulfur proteins that transfer electrons in a wide variety of metabolic reactions. The polypeptide is Ferredoxin YfhL (yfhL) (Escherichia coli (strain K12)).